A 252-amino-acid polypeptide reads, in one-letter code: 14-3-3 protein homolog 1 (252 aa).

This sequence belongs to the 14-3-3 family.

The protein is 14-3-3 protein homolog 1 of Schistosoma mansoni (Blood fluke).